We begin with the raw amino-acid sequence, 709 residues long: Polyribonucleotide nucleotidyltransferase (709 aa).

Residues Asp489 and Asp495 each contribute to the Mg(2+) site. Residues 556-615 (PKIDMIKIDVDKIKVVIGKGGETIDKIIAETGVKIDIDEEGNVSIFSSDQAAIDRTKDII) enclose the KH domain. Residues 625 to 693 (GEVYHAKVVR…DKGRVDASMK (69 aa)) form the S1 motif domain.

It belongs to the polyribonucleotide nucleotidyltransferase family. Mg(2+) serves as cofactor.

It is found in the cytoplasm. It carries out the reaction RNA(n+1) + phosphate = RNA(n) + a ribonucleoside 5'-diphosphate. Functionally, involved in mRNA degradation. Catalyzes the phosphorolysis of single-stranded polyribonucleotides processively in the 3'- to 5'-direction. This Streptococcus agalactiae serotype III (strain NEM316) protein is Polyribonucleotide nucleotidyltransferase.